We begin with the raw amino-acid sequence, 200 residues long: GTP cyclohydrolase 1 (200 aa).

Zn(2+) is bound by residues Cys-87, His-90, and Cys-158.

The protein belongs to the GTP cyclohydrolase I family. In terms of assembly, toroid-shaped homodecamer, composed of two pentamers of five dimers.

The catalysed reaction is GTP + H2O = 7,8-dihydroneopterin 3'-triphosphate + formate + H(+). Its pathway is cofactor biosynthesis; 7,8-dihydroneopterin triphosphate biosynthesis; 7,8-dihydroneopterin triphosphate from GTP: step 1/1. In Xanthomonas euvesicatoria pv. vesicatoria (strain 85-10) (Xanthomonas campestris pv. vesicatoria), this protein is GTP cyclohydrolase 1.